The primary structure comprises 329 residues: Bile salt hydrolase/transferase (329 aa).

The Nucleophile; acyl-thioester intermediate role is filled by Cys-2. Cys-2 and Arg-18 together coordinate deoxycholate. Asn-82 serves as a coordination point for taurine.

The protein belongs to the peptidase C59 family. As to quaternary structure, homotetramer. The tetramer consists of a dimer of dimers.

It catalyses the reaction glycocholate + H2O = cholate + glycine. It carries out the reaction cholate + taurine = taurocholate + H2O. The catalysed reaction is taurodeoxycholate + H2O = deoxycholate + taurine. The enzyme catalyses glycodeoxycholate + H2O = deoxycholate + glycine. It catalyses the reaction chenodeoxycholate + glycine = glycochenodeoxycholate + H2O. It carries out the reaction taurochenodeoxycholate + H2O = chenodeoxycholate + taurine. The catalysed reaction is an L-alpha-amino acid + cholate = an N-choloyl-L-alpha-amino acid + H2O. The enzyme catalyses an L-alpha-amino acid + taurocholate = an N-choloyl-L-alpha-amino acid + taurine. It catalyses the reaction glycocholate + an L-alpha-amino acid = an N-choloyl-L-alpha-amino acid + glycine. It carries out the reaction cholate + L-histidine = L-histidocholate + H2O. The catalysed reaction is taurocholate + L-histidine = L-histidocholate + taurine. The enzyme catalyses glycocholate + L-histidine = L-histidocholate + glycine. It catalyses the reaction cholate + L-arginine = L-arginocholate + H2O. It carries out the reaction taurocholate + L-arginine = L-arginocholate + taurine. The catalysed reaction is glycocholate + L-arginine = L-arginocholate + glycine. The enzyme catalyses cholate + L-phenylalanine = L-phenylalanocholate + H2O. It catalyses the reaction taurocholate + L-phenylalanine = L-phenylalanocholate + taurine. The protein operates within lipid metabolism; bile acid biosynthesis. Its function is as follows. Possesses dual functions in bile acid metabolism. Acts as a bile salt hydrolase that catalyzes the deconjugation of glycine- and taurine-linked bile salts, which occurs naturally in the intestines of humans, releasing amino acid residues and deconjugated bile salts (bile acids). Can hydrolyze the amide bond in major human conjugated bile salts, such as glycocholate (GCA), taurocholate (TCA) and taurodeoxycholate (TDCA). Shows a slight preference for taurine-conjugated bile acids as substrates. Also acts as an amine N-acyltransferase that conjugates a wide variety of amino acids to conjugated and non-conjugated bile acids, thus producing bacterial bile acid amidates (BBAAs) - also named microbially conjugated bile acids (MCBAs) - in the gastrointestinal tract. These BBAAs may facilitate communication between the microbiota and host through the activation of human ligand-activated transcription factors. The sequence is that of Bile salt hydrolase/transferase (cbh) from Clostridium perfringens (strain 13 / Type A).